The chain runs to 344 residues: Phenylalanine--tRNA ligase alpha subunit (344 aa).

E269 is a binding site for Mg(2+).

This sequence belongs to the class-II aminoacyl-tRNA synthetase family. Phe-tRNA synthetase alpha subunit type 1 subfamily. Tetramer of two alpha and two beta subunits. It depends on Mg(2+) as a cofactor.

It is found in the cytoplasm. The catalysed reaction is tRNA(Phe) + L-phenylalanine + ATP = L-phenylalanyl-tRNA(Phe) + AMP + diphosphate + H(+). This Ralstonia nicotianae (strain ATCC BAA-1114 / GMI1000) (Ralstonia solanacearum) protein is Phenylalanine--tRNA ligase alpha subunit.